A 290-amino-acid polypeptide reads, in one-letter code: Zinc finger AN1 and C2H2 domain-containing stress-associated protein 16 (290 aa).

AN1-type zinc fingers lie at residues 7-55 (PNLG…QKDV) and 95-145 (VTKK…KPES). Residues C13, C18, C28, C31, C36, H39, H45, C47, C101, C106, C118, C121, C126, H129, H135, and C137 each coordinate Zn(2+). 2 C2H2-type zinc fingers span residues 224–247 (EQCVQCPARFSTVGALIEHCEKSH) and 261–284 (DVCPKCSKAFRDPVLLVEHVERDH).

Its function is as follows. May be involved in environmental stress response. This is Zinc finger AN1 and C2H2 domain-containing stress-associated protein 16 (SAP16) from Oryza sativa subsp. japonica (Rice).